The chain runs to 190 residues: Ribosome hibernation promotion factor (190 aa).

This sequence belongs to the HPF/YfiA ribosome-associated protein family. Long HPF subfamily. In terms of assembly, interacts with 100S ribosomes.

The protein localises to the cytoplasm. In terms of biological role, required for dimerization of active 70S ribosomes into 100S ribosomes in stationary phase; 100S ribosomes are translationally inactive and sometimes present during exponential growth. This is Ribosome hibernation promotion factor from Rhizobium meliloti (strain 1021) (Ensifer meliloti).